A 699-amino-acid chain; its full sequence is PTS system glucose-specific EIICBA component (699 aa).

Residues 3–424 enclose the PTS EIIC type-1 domain; it reads KALFGVLQKI…FNLKTPGRED (422 aa). 11 helical membrane-spanning segments follow: residues 16–36, 66–86, 89–109, 139–159, 180–200, 233–253, 283–303, 313–333, 338–358, 365–385, and 388–408; these read LMLPVAILPAAGILLAIGNAM, IVFDNLPLLFAVGVAIGLANG, VAGIAAIIGYLVMNVSMSAVL, IPTLATGVFGGIIVGVLAALL, FVPIVTSISALILGLIMLVIW, LIPFGLHHIFYSPFWYEFFSY, FMTGKYPFMMFGLPAAALAIY, LVAGIMGSAALTSFLTGITEP, FLFVAPVLFAIHCLFAGLSFM, VKIGMTFSGGLIDYFLFGILP, and TAWWLVIPVGLGLAVIYYFGF. A PTS EIIB type-1 domain is found at 439-520; the sequence is GDLPYEILQA…QDIIAGRKPR (82 aa). The Phosphocysteine intermediate; for EIIB activity role is filled by cysteine 461. Residues 568–672 form the PTS EIIA type-1 domain; the sequence is DQVFSGKMMG…SLMTPIVFTN (105 aa). Residue histidine 620 is the Tele-phosphohistidine intermediate; for EIIA activity of the active site.

It localises to the cell membrane. The catalysed reaction is N(pros)-phospho-L-histidyl-[protein] + D-glucose(out) = D-glucose 6-phosphate(in) + L-histidyl-[protein]. It catalyses the reaction D-glucosamine(out) + N(pros)-phospho-L-histidyl-[protein] = D-glucosamine 6-phosphate(in) + L-histidyl-[protein]. Its function is as follows. The phosphoenolpyruvate-dependent sugar phosphotransferase system (sugar PTS), a major carbohydrate active transport system, catalyzes the phosphorylation of incoming sugar substrates concomitantly with their translocation across the cell membrane. This system is involved in glucose transport. The system can also transport glucosamine. In addition, plays an important role in the phosphorylation of EIIA-deficient PTS transporters. The EIIA domain can transfer a phosphoryl group to EIIA-deficient PTS transporters, enabling growth with maltose, N-acetylglucosamine, sucrose or trehalose as the sole carbon source. In Bacillus subtilis (strain 168), this protein is PTS system glucose-specific EIICBA component (ptsG).